The sequence spans 603 residues: uncharacterized protein (603 aa).

Residues 257 to 281 form a disordered region; sequence AGEAASSDHDQKISRVTRKRPREPK.

This is an uncharacterized protein from Saccharomyces cerevisiae (strain ATCC 204508 / S288c) (Baker's yeast).